Consider the following 315-residue polypeptide: Glycine--tRNA ligase alpha subunit (315 aa).

The protein belongs to the class-II aminoacyl-tRNA synthetase family. As to quaternary structure, tetramer of two alpha and two beta subunits.

The protein resides in the cytoplasm. The enzyme catalyses tRNA(Gly) + glycine + ATP = glycyl-tRNA(Gly) + AMP + diphosphate. This Pseudomonas syringae pv. tomato (strain ATCC BAA-871 / DC3000) protein is Glycine--tRNA ligase alpha subunit.